We begin with the raw amino-acid sequence, 194 residues long: Large ribosomal subunit protein eL15 (194 aa).

Positions 160–194 (RGLTSAGKKGRGLMYKGKGAEKVRPSVRANSKKAK) are disordered.

Belongs to the eukaryotic ribosomal protein eL15 family.

This is Large ribosomal subunit protein eL15 from Methanococcus maripaludis (strain C6 / ATCC BAA-1332).